Here is a 927-residue protein sequence, read N- to C-terminus: F-box only protein 11 (927 aa).

A disordered region spans residues 1–132 (MNSVRAANRR…STSTTENFGH (132 aa)). A compositionally biased stretch (basic residues) spans 7–16 (ANRRPRRVSR). A compositionally biased stretch (low complexity) spans 17–27 (PRPVQQQQQQP). Residues 28–68 (PQQPPPQPPQQQPPQQQPPPPPQQQQQQQPPPPPPPPPPLP) are compositionally biased toward pro residues. Polar residues predominate over residues 114–129 (PTKNSMEGASTSTTEN). The F-box domain occupies 153-199 (QYLQEKLPDEVVLKIFSYLLEQDLCRAACVCKRFSELANDPILWKRL). 19 PbH1 repeats span residues 395 to 417 (GACP…YITD), 418 to 440 (HAQG…WVKN), 441 to 463 (HGNP…FTFD), 464 to 486 (HGMG…EVKA), 487 to 509 (YANP…YVHE), 510 to 532 (KGRG…WITS), 533 to 555 (NSDP…YIFG), 556 to 578 (DGRG…QIRT), 579 to 601 (NSCP…YVHE), 602 to 624 (KGQG…WVTT), 625 to 647 (GSTP…YFYD), 648 to 670 (NGHG…QIRT), 671 to 693 (GSNP…LVYN), 694 to 716 (SGLG…WIKT), 717 to 739 (DSNP…CIFN), 740 to 762 (GGRG…LIST), 763 to 785 (NSHP…EITN), 786 to 808 (HATA…FLAS), and 809 to 830 (GVNV…EKAV). The segment at 833–904 (GQCLYKISSY…LSNPCTLAGE (72 aa)) adopts a UBR-type zinc-finger fold.

In terms of assembly, component of the SCF(FBXO11) complex consisting of CUL1, RBX1, SKP1 and FBXO11. Interacts with CIITA. As to expression, isoform 5 is expressed in keratinocytes, fibroblasts and melanocytes.

It localises to the nucleus. Its subcellular location is the chromosome. It participates in protein modification; protein ubiquitination. Substrate recognition component of a SCF (SKP1-CUL1-F-box protein) E3 ubiquitin-protein ligase complex which mediates the ubiquitination and subsequent proteasomal degradation of target proteins, such as DTL/CDT2, BCL6, SNAI1 and PRDM1/BLIMP1. The SCF(FBXO11) complex mediates ubiquitination and degradation of BCL6, thereby playing a role in the germinal center B-cells terminal differentiation toward memory B-cells and plasma cells. The SCF(FBXO11) complex also mediates ubiquitination and degradation of DTL, an important step for the regulation of TGF-beta signaling, cell migration and the timing of the cell-cycle progression and exit. The SCF(FBXO11) complex also catalyzes ubiquitination and degradation of GSK3B-phosphorylated SNAI1. Binds to and neddylates phosphorylated p53/TP53, inhibiting its transcriptional activity. Plays a role in the regulatiom of erythropoiesis but not myelopoiesis or megakaryopoiesis. Mechanistically, activates erythroid genes by mediating the degradation of BAHD1, a heterochromatin-associated protein that recruits corepressors to H3K27me3 marks. Participates in macrophage cell death and inflammation in response to bacterial toxins by regulating the expression of complement 5a receptor 1/C5AR1 and IL-1beta. Acts as a critical regulator to determine the level of MHC-II by mediating the recognition of degron at the P/S/T domain of CIITA leading to its ubiquitination and subsequent degradation via the proteasome. Participates in the antiviral repsonse by initiating the activation of TBK1-IRF3-IFN-I axis. Mediates the 'Lys-63'-linked ubiquitination of TRAF3 to strengthen the interaction between TRAF3 and TBK1. The protein is F-box only protein 11 of Homo sapiens (Human).